We begin with the raw amino-acid sequence, 829 residues long: Cadherin-16 (829 aa).

A signal peptide spans 1 to 18 (MVPAWLWLLCFSVPQALV). Topologically, residues 19-786 (EVSPTTLHVE…MKGMPTKLSA (768 aa)) are extracellular. Cadherin domains follow at residues 25 to 126 (LHVE…VPQF), 131 to 235 (YSAR…SIVE), 242 to 336 (EPVH…APVC), 341 to 449 (PPVS…APEF), 455 to 564 (GPVS…PPRL), and 569 to 665 (YEAD…APAL). Asparagine 517, asparagine 602, and asparagine 722 each carry an N-linked (GlcNAc...) asparagine glycan. The interval 666–786 (PLAPMPSRHL…MKGMPTKLSA (121 aa)) is ectodomain G. A helical transmembrane segment spans residues 787–807 (VGILVGTLAAIGFFLILIFTH). Residues 808–829 (LALARKKDLDAPADNVPLKAAA) are Cytoplasmic-facing.

Kidney specific. Limited to the basolateral membranes of renal tubular epithelial cells.

It is found in the cell membrane. Functionally, cadherins are calcium-dependent cell adhesion proteins. They preferentially interact with themselves in a homophilic manner in connecting cells; cadherins may thus contribute to the sorting of heterogeneous cell types. This chain is Cadherin-16 (CDH16), found in Oryctolagus cuniculus (Rabbit).